The sequence spans 385 residues: Probable protein phosphatase 2C 38 (385 aa).

The PPM-type phosphatase domain occupies 46-357 (VAGEFSMSVI…DDITVIVVFL (312 aa)). A Phosphoserine modification is found at S77. Mn(2+) is bound by residues D88, G89, D289, and D348.

Belongs to the PP2C family. In terms of assembly, interacts with BIK1. Requires Mg(2+) as cofactor. It depends on Mn(2+) as a cofactor. In terms of processing, phosphorylation at Ser-77 induces dissociation of PP2C38 from BIK1.

The protein localises to the cell membrane. The catalysed reaction is O-phospho-L-seryl-[protein] + H2O = L-seryl-[protein] + phosphate. It carries out the reaction O-phospho-L-threonyl-[protein] + H2O = L-threonyl-[protein] + phosphate. May dephosphorylate and repress plasma membrane H(+)-ATPases (PM H(+)-ATPases, e.g. AHA1 and AHA2), thus influencing negatively plant growth and fitness. Involved in pathogen-associated molecular pattern (PAMP)-triggered immunity (PTI) signaling. Negatively regulates immune responses by controlling the phosphorylation and activation status of BIK1, a central rate-limiting kinase in PTI signaling. Impairs the phosphorylation of the NADPH oxidase RBOHD by BIK1. This chain is Probable protein phosphatase 2C 38, found in Arabidopsis thaliana (Mouse-ear cress).